A 266-amino-acid chain; its full sequence is Interleukin-1 beta (266 aa).

Positions 1–113 (MATVPEPINE…ETSSDELLCD (113 aa)) are excised as a propeptide.

It belongs to the IL-1 family. Monomer. In its precursor form, weakly interacts with full-length MEFV; the mature cytokine does not interact at all. Interacts with integrins ITGAV:ITGBV and ITGA5:ITGB1; integrin-binding is required for IL1B signaling. Interacts with cargo receptor TMED10; the interaction is direct and is required for the secretion of IL1B mature form. Interacts with HSP90AB1; the interaction facilitates cargo translocation into the ERGIC. Interacts with HSP90B1; the interaction facilitates cargo translocation into the ERGIC.

It localises to the cytoplasm. It is found in the cytosol. The protein resides in the secreted. Its subcellular location is the lysosome. The protein localises to the extracellular exosome. Functionally, potent pro-inflammatory cytokine. Initially discovered as the major endogenous pyrogen, induces prostaglandin synthesis, neutrophil influx and activation, T-cell activation and cytokine production, B-cell activation and antibody production, and fibroblast proliferation and collagen production. Promotes Th17 differentiation of T-cells. Synergizes with IL12/interleukin-12 to induce IFNG synthesis from T-helper 1 (Th1) cells. Plays a role in angiogenesis by inducing VEGF production synergistically with TNF and IL6. Involved in transduction of inflammation downstream of pyroptosis: its mature form is specifically released in the extracellular milieu by passing through the gasdermin-D (GSDMD) pore. The protein is Interleukin-1 beta (IL1B) of Capra hircus (Goat).